We begin with the raw amino-acid sequence, 358 residues long: Peptide chain release factor 1 (358 aa).

Position 235 is an N5-methylglutamine (Gln-235).

It belongs to the prokaryotic/mitochondrial release factor family. Methylated by PrmC. Methylation increases the termination efficiency of RF1.

The protein resides in the cytoplasm. Peptide chain release factor 1 directs the termination of translation in response to the peptide chain termination codons UAG and UAA. In Brachyspira hyodysenteriae (strain ATCC 49526 / WA1), this protein is Peptide chain release factor 1.